A 526-amino-acid polypeptide reads, in one-letter code: Probable di/tripeptide-binding protein 5 (526 aa).

Positions 1 to 21 (MRLAAFSLFLAPLLLAQPAAA) are cleaved as a signal peptide.

The protein belongs to the bacterial solute-binding protein 5 family. As to quaternary structure, the complex is composed of two ATP-binding proteins (DppD and DppF), two transmembrane proteins (DppB and DppC) and a solute-binding protein (DppA5). Five orthologous SBPs (DppA1-A5) are present in P.aeruginosa, which increases the substrate specificity of the DppBCDF transporter.

Functionally, part of the ABC transporter DppABCDF involved in the uptake of various di/tripeptides. The sequence is that of Probable di/tripeptide-binding protein 5 from Pseudomonas aeruginosa (strain UCBPP-PA14).